We begin with the raw amino-acid sequence, 325 residues long: tRNA dimethylallyltransferase (325 aa).

25–32 (GNTGSGKS) serves as a coordination point for ATP. A substrate-binding site is contributed by 27–32 (TGSGKS). The tract at residues 50–53 (DSRQ) is interaction with substrate tRNA.

It belongs to the IPP transferase family. As to quaternary structure, monomer. Mg(2+) serves as cofactor.

It carries out the reaction adenosine(37) in tRNA + dimethylallyl diphosphate = N(6)-dimethylallyladenosine(37) in tRNA + diphosphate. In terms of biological role, catalyzes the transfer of a dimethylallyl group onto the adenine at position 37 in tRNAs that read codons beginning with uridine, leading to the formation of N6-(dimethylallyl)adenosine (i(6)A). This Dehalococcoides mccartyi (strain ATCC BAA-2266 / KCTC 15142 / 195) (Dehalococcoides ethenogenes (strain 195)) protein is tRNA dimethylallyltransferase.